A 420-amino-acid polypeptide reads, in one-letter code: Tol-Pal system protein TolB (420 aa).

Residues 1–21 (MKLFVHLVLFISLFIPYFTKA) form the signal peptide.

It belongs to the TolB family. In terms of assembly, the Tol-Pal system is composed of five core proteins: the inner membrane proteins TolA, TolQ and TolR, the periplasmic protein TolB and the outer membrane protein Pal. They form a network linking the inner and outer membranes and the peptidoglycan layer.

It is found in the periplasm. Functionally, part of the Tol-Pal system, which plays a role in outer membrane invagination during cell division and is important for maintaining outer membrane integrity. The chain is Tol-Pal system protein TolB from Wolbachia sp. subsp. Drosophila simulans (strain wRi).